Consider the following 147-residue polypeptide: Siroheme decarboxylase NirG subunit (147 aa).

This sequence belongs to the Ahb/Nir family. Probably forms a complex composed of NirD, NirL, NirG and NirH. All proteins are required for the total conversion of siroheme to didecarboxysiroheme.

It carries out the reaction siroheme + 2 H(+) = 12,18-didecarboxysiroheme + 2 CO2. Its pathway is porphyrin-containing compound metabolism. Involved in heme d1 biosynthesis. Catalyzes the decarboxylation of siroheme into didecarboxysiroheme. This is Siroheme decarboxylase NirG subunit from Pseudomonas aeruginosa (strain ATCC 15692 / DSM 22644 / CIP 104116 / JCM 14847 / LMG 12228 / 1C / PRS 101 / PAO1).